The primary structure comprises 253 residues: N-acetylglucosaminyl-phosphatidylinositol de-N-acetylase (253 aa).

The helical transmembrane segment at 3–23 (VAAPLLCLAAAVLVWGVLWVW) threads the bilayer. The Cytoplasmic segment spans residues 24–253 (GSWERMTRPE…YMRINSLNFL (230 aa)).

The protein belongs to the PIGL family.

It is found in the endoplasmic reticulum membrane. The enzyme catalyses a 6-(N-acetyl-alpha-D-glucosaminyl)-1-(1,2-diacyl-sn-glycero-3-phospho)-1D-myo-inositol + H2O = a 6-(alpha-D-glucosaminyl)-1-(1,2-diacyl-sn-glycero-3-phospho)-1D-myo-inositol + acetate. It participates in glycolipid biosynthesis; glycosylphosphatidylinositol-anchor biosynthesis. Functionally, catalyzes the second step of glycosylphosphatidylinositol (GPI) biosynthesis, which is the de-N-acetylation of N-acetylglucosaminyl-phosphatidylinositol. In Bos taurus (Bovine), this protein is N-acetylglucosaminyl-phosphatidylinositol de-N-acetylase (PIGL).